Consider the following 180-residue polypeptide: V-type proton ATPase subunit c''1 (180 aa).

At 1 to 26 (MSGVVALGHASSWGAALVRISPYTFS) the chain is on the lumenal side. A helical membrane pass occupies residues 27-47 (AIGIAISIGVSVLGAAWGIYI). The Cytoplasmic segment spans residues 48-66 (TGSSLIGAAIEAPRITSKN). The helical transmembrane segment at 67 to 87 (LISVIFCEAVAIYGVIVAIIL) threads the bilayer. At 88 to 110 (QTKLESVPSSKMYDAESLRAGYA) the chain is on the lumenal side. The helical transmembrane segment at 111-131 (IFASGIIVGFANLVCGLCVGI) threads the bilayer. The Cytoplasmic portion of the chain corresponds to 132–149 (IGSSCALSDAQNSTLFVK). Residues 150-170 (ILVIEIFGSALGLFGVIVGII) form a helical membrane-spanning segment. At 171–180 (MSAQATWPTK) the chain is on the lumenal side.

Belongs to the V-ATPase proteolipid subunit family. In terms of assembly, V-ATPase is a heteromultimeric enzyme composed of a peripheral catalytic V1 complex (components A to H) attached to an integral membrane V0 proton pore complex (components: a, c, c'', d and e). The proteolipid components c and c'' are present as a hexameric ring that forms the proton-conducting pore. As to expression, preferentially expressed in roots.

The protein localises to the endoplasmic reticulum membrane. It localises to the golgi apparatus membrane. Its function is as follows. Proton-conducting pore forming subunit of the membrane integral V0 complex of vacuolar ATPase. V-ATPase is responsible for acidifying a variety of intracellular compartments in eukaryotic cells. This chain is V-type proton ATPase subunit c''1 (VHA-c''1), found in Arabidopsis thaliana (Mouse-ear cress).